A 648-amino-acid polypeptide reads, in one-letter code: 1-deoxy-D-xylulose-5-phosphate synthase (648 aa).

Residues His79 and 120 to 122 (GHA) each bind thiamine diphosphate. Asp152 lines the Mg(2+) pocket. Thiamine diphosphate contacts are provided by residues 153–154 (GS), Asn181, Phe293, and Glu377. Residue Asn181 coordinates Mg(2+).

The protein belongs to the transketolase family. DXPS subfamily. Homodimer. It depends on Mg(2+) as a cofactor. Thiamine diphosphate serves as cofactor.

It catalyses the reaction D-glyceraldehyde 3-phosphate + pyruvate + H(+) = 1-deoxy-D-xylulose 5-phosphate + CO2. It participates in metabolic intermediate biosynthesis; 1-deoxy-D-xylulose 5-phosphate biosynthesis; 1-deoxy-D-xylulose 5-phosphate from D-glyceraldehyde 3-phosphate and pyruvate: step 1/1. In terms of biological role, catalyzes the acyloin condensation reaction between C atoms 2 and 3 of pyruvate and glyceraldehyde 3-phosphate to yield 1-deoxy-D-xylulose-5-phosphate (DXP). The polypeptide is 1-deoxy-D-xylulose-5-phosphate synthase (Bacteroides fragilis (strain ATCC 25285 / DSM 2151 / CCUG 4856 / JCM 11019 / LMG 10263 / NCTC 9343 / Onslow / VPI 2553 / EN-2)).